The chain runs to 372 residues: Phospho-N-acetylmuramoyl-pentapeptide-transferase (372 aa).

10 helical membrane passes run 25-45 (RSLL…PIMI), 73-93 (TMGG…WADL), 98-118 (VWIV…DDWI), 134-154 (FFWT…IATQ), 176-196 (SIPL…YLVI), 211-231 (GLAI…AYLS), 251-271 (LVVI…YNAH), 275-295 (VFMG…IAVM), 300-320 (IVFA…FLQI), and 349-369 (QVVI…LMTL).

The protein belongs to the glycosyltransferase 4 family. MraY subfamily. Mg(2+) serves as cofactor.

The protein resides in the cell inner membrane. It catalyses the reaction UDP-N-acetyl-alpha-D-muramoyl-L-alanyl-gamma-D-glutamyl-meso-2,6-diaminopimeloyl-D-alanyl-D-alanine + di-trans,octa-cis-undecaprenyl phosphate = di-trans,octa-cis-undecaprenyl diphospho-N-acetyl-alpha-D-muramoyl-L-alanyl-D-glutamyl-meso-2,6-diaminopimeloyl-D-alanyl-D-alanine + UMP. It participates in cell wall biogenesis; peptidoglycan biosynthesis. Catalyzes the initial step of the lipid cycle reactions in the biosynthesis of the cell wall peptidoglycan: transfers peptidoglycan precursor phospho-MurNAc-pentapeptide from UDP-MurNAc-pentapeptide onto the lipid carrier undecaprenyl phosphate, yielding undecaprenyl-pyrophosphoryl-MurNAc-pentapeptide, known as lipid I. The sequence is that of Phospho-N-acetylmuramoyl-pentapeptide-transferase from Acinetobacter baumannii (strain AB0057).